The following is a 1345-amino-acid chain: Aldehyde oxidase 2 (1345 aa).

The 2Fe-2S ferredoxin-type domain occupies 9–96; that stretch reads DELEFFVNGK…GAAVTTVEGV (88 aa). Residues C48, C53, C56, and C78 each coordinate [2Fe-2S] cluster. Q117 lines the Mo-molybdopterin pocket. The [2Fe-2S] cluster site is built by C118, C121, C153, and C155. C155 contacts Mo-molybdopterin. Residues 238–423 form the FAD-binding PCMH-type domain; sequence FYGERITWIA…GSVYIPHSQK (186 aa). FAD-binding positions include 266-273, A347, S356, H360, D369, and L413; that span reads LISGNTAL. Residues 812–813, 1094–1097, Q1209, and L1274 each bind Mo-molybdopterin; these read GF and ASVG. E1276 acts as the Proton acceptor; for azaheterocycle hydroxylase activity in catalysis.

The protein belongs to the xanthine dehydrogenase family. In terms of assembly, homodimer. It depends on [2Fe-2S] cluster as a cofactor. FAD is required as a cofactor. Mo-molybdopterin serves as cofactor.

Its subcellular location is the cytoplasm. The catalysed reaction is an aldehyde + O2 + H2O = a carboxylate + H2O2 + H(+). In terms of biological role, oxidase with broad substrate specificity, oxidizing aromatic azaheterocycles, such as phthalazine, as well as aldehydes, such as benzaldehyde and retinal. This Rattus norvegicus (Rat) protein is Aldehyde oxidase 2 (Aox2).